A 342-amino-acid polypeptide reads, in one-letter code: L-threonine 3-dehydrogenase (342 aa).

C38 provides a ligand contact to Zn(2+). Catalysis depends on charge relay system residues T40 and H43. Residues H63, E64, C93, C96, C99, and C107 each coordinate Zn(2+). NAD(+) is bound by residues I175, D195, R200, 262–264, and 286–287; these read LGI and IY.

The protein belongs to the zinc-containing alcohol dehydrogenase family. Homotetramer. Zn(2+) serves as cofactor.

It is found in the cytoplasm. It catalyses the reaction L-threonine + NAD(+) = (2S)-2-amino-3-oxobutanoate + NADH + H(+). Its pathway is amino-acid degradation; L-threonine degradation via oxydo-reductase pathway; glycine from L-threonine: step 1/2. Its function is as follows. Catalyzes the NAD(+)-dependent oxidation of L-threonine to 2-amino-3-ketobutyrate. This Burkholderia lata (strain ATCC 17760 / DSM 23089 / LMG 22485 / NCIMB 9086 / R18194 / 383) protein is L-threonine 3-dehydrogenase.